The primary structure comprises 489 residues: uncharacterized protein (489 aa).

Transmembrane regions (helical) follow at residues 29–49, 67–87, 90–110, 119–139, 152–172, 186–206, 276–296, 308–328, 351–371, 397–417, and 418–438; these read FIAS…TGLG, LLYA…KYLG, WALA…WYFD, IFTG…TAYI, FIAT…FIAF, AVYI…ILFI, LNNV…TLIL, IIGL…ELGW, GGAL…IVSV, AAGM…LGQG, and IIYF…TSIF.

The protein localises to the membrane. This is an uncharacterized protein from Schizosaccharomyces pombe (strain 972 / ATCC 24843) (Fission yeast).